Reading from the N-terminus, the 764-residue chain is Cyclin-F (764 aa).

The short motif at 19–27 (RKRVRKRAS) is the Nuclear localization signal 1 element. One can recognise an F-box domain in the interval 28-75 (AVSLLSLPEELLVFVLQCLSAEDLLSVRAVHSHLCDIIDTNASIWARV). Positions 307-404 (TKRYILVDWL…EVISVLDGKI (98 aa)) constitute a Cyclin N-terminal domain. The D box 1 signature appears at 309 to 312 (RYIL). The short motif at 570 to 575 (SSKRRR) is the Nuclear localization signal 2 element. The interval 583-738 (RGAFVATPTA…PSQRIRRQVK (156 aa)) is PEST. A disordered region spans residues 662–754 (CEEDEQEPPT…HSAGEAEQED (93 aa)). A compositionally biased stretch (low complexity) spans 682–692 (SSSSTSSSSSS). Polar residues predominate over residues 702-722 (SGYSSIQSFPSPTGSSALVSP). The segment covering 732–742 (RIRRQVKRKNT) has biased composition (basic residues).

This sequence belongs to the cyclin family. Cyclin AB subfamily. In terms of assembly, component of the SCF(CCNF) complex. As to expression, expressed in the brain.

It localises to the nucleus. The protein localises to the cytoplasm. It is found in the perinuclear region. The protein resides in the cytoskeleton. Its subcellular location is the microtubule organizing center. It localises to the centrosome. The protein localises to the centriole. Functionally, substrate recognition component of a SCF (SKP1-CUL1-F-box protein) E3 ubiquitin-protein ligase complex which mediates the ubiquitination and subsequent proteasomal degradation of target proteins. The SCF(CCNF) E3 ubiquitin-protein ligase complex is an integral component of the ubiquitin proteasome system (UPS) and links proteasome degradation to the cell cycle. Mediates the substrate recognition and the proteasomal degradation of various target proteins during G2 phase involved in the regulation of cell cycle progression and in the maintenance of genome stability. May play a role in motor neuron development and axonal outgrowth. This is Cyclin-F (ccnf) from Danio rerio (Zebrafish).